Reading from the N-terminus, the 507-residue chain is Histidine ammonia-lyase (507 aa).

Residues 143–145 (ASG) constitute a cross-link (5-imidazolinone (Ala-Gly)). At Ser144 the chain carries 2,3-didehydroalanine (Ser).

The protein belongs to the PAL/histidase family. Post-translationally, contains an active site 4-methylidene-imidazol-5-one (MIO), which is formed autocatalytically by cyclization and dehydration of residues Ala-Ser-Gly.

The protein localises to the cytoplasm. The enzyme catalyses L-histidine = trans-urocanate + NH4(+). Its pathway is amino-acid degradation; L-histidine degradation into L-glutamate; N-formimidoyl-L-glutamate from L-histidine: step 1/3. The sequence is that of Histidine ammonia-lyase from Alkaliphilus oremlandii (strain OhILAs) (Clostridium oremlandii (strain OhILAs)).